The primary structure comprises 149 residues: Transcriptional repressor NrdR (149 aa).

A zinc finger spans residues 3–34; that stretch reads CPFCSEQETKVIDSRLVAEGQQVRRRRECMVC. An ATP-cone domain is found at 49–139; the sequence is PRVIKRDGSR…VYRSFEDIRE (91 aa).

Belongs to the NrdR family. It depends on Zn(2+) as a cofactor.

Its function is as follows. Negatively regulates transcription of bacterial ribonucleotide reductase nrd genes and operons by binding to NrdR-boxes. The protein is Transcriptional repressor NrdR of Alteromonas mediterranea (strain DSM 17117 / CIP 110805 / LMG 28347 / Deep ecotype).